The following is a 175-amino-acid chain: Large ribosomal subunit protein uL10 (175 aa).

It belongs to the universal ribosomal protein uL10 family. Part of the ribosomal stalk of the 50S ribosomal subunit. The N-terminus interacts with L11 and the large rRNA to form the base of the stalk. The C-terminus forms an elongated spine to which L12 dimers bind in a sequential fashion forming a multimeric L10(L12)X complex.

Forms part of the ribosomal stalk, playing a central role in the interaction of the ribosome with GTP-bound translation factors. In Prochlorococcus marinus (strain NATL2A), this protein is Large ribosomal subunit protein uL10.